The sequence spans 386 residues: Peroxisomal membrane protein PEX13 (386 aa).

Residues 1–76 form a disordered region; it reads MSSTAVPRPK…SSGTYGESNT (76 aa). Residues 1–263 are Lumenal-facing; that stretch reads MSSTAVPRPK…KATRRKISWK (263 aa). Residues 23-39 show a composition bias toward polar residues; it reads RNAQSLSAMMTSNQQDS. Over residues 44-55 the composition is skewed to low complexity; it reads ESNNSNSASESA. The span at 65–76 shows a compositional bias: polar residues; it reads LNSSGTYGESNT. Residues 264-280 form a helical membrane-spanning segment; the sequence is PLLFFLMAVFGFPYLLN. Residues 281-386 are Cytoplasmic-facing; it reads KFITKLQTSG…EHVDDETRTH (106 aa). Residues 306–372 form the SH3 domain; that stretch reads SKLEFARALY…PYNYIEIIKR (67 aa).

It belongs to the peroxin-13 family. Interacts (via SH3 domain) with PEX14 (via SH3-binding motif); forming the PEX13-PEX14 docking complex.

The protein localises to the peroxisome membrane. Functionally, component of the PEX13-PEX14 docking complex, a translocon channel that specifically mediates the import of peroxisomal cargo proteins bound to PEX5 or PEX21 receptors. The PEX13-PEX14 docking complex forms a large import pore which can be opened to a diameter of about 9 nm. Mechanistically, PEX5 (or PEX21) receptor along with cargo proteins associates with the PEX14 subunit of the PEX13-PEX14 docking complex in the cytosol, leading to the insertion of the receptor into the organelle membrane with the concomitant translocation of the cargo into the peroxisome matrix. This Saccharomyces cerevisiae (strain ATCC 204508 / S288c) (Baker's yeast) protein is Peroxisomal membrane protein PEX13.